A 371-amino-acid polypeptide reads, in one-letter code: Aspartate-semialdehyde dehydrogenase (371 aa).

Residues 9 to 12 (RGMV), 37 to 38 (TS), and Gln73 contribute to the NADP(+) site. Arg102 provides a ligand contact to phosphate. The active-site Acyl-thioester intermediate is Cys135. Position 162 (Gln162) interacts with substrate. NADP(+) is bound by residues 165 to 166 (SG) and Pro193. Glu241 is a substrate binding site. Lys244 serves as a coordination point for phosphate. Residue Arg268 participates in substrate binding. Catalysis depends on His275, which acts as the Proton acceptor. Gln351 is an NADP(+) binding site.

Belongs to the aspartate-semialdehyde dehydrogenase family. In terms of assembly, homodimer.

The enzyme catalyses L-aspartate 4-semialdehyde + phosphate + NADP(+) = 4-phospho-L-aspartate + NADPH + H(+). It functions in the pathway amino-acid biosynthesis; L-lysine biosynthesis via DAP pathway; (S)-tetrahydrodipicolinate from L-aspartate: step 2/4. Its pathway is amino-acid biosynthesis; L-methionine biosynthesis via de novo pathway; L-homoserine from L-aspartate: step 2/3. The protein operates within amino-acid biosynthesis; L-threonine biosynthesis; L-threonine from L-aspartate: step 2/5. In terms of biological role, catalyzes the NADPH-dependent formation of L-aspartate-semialdehyde (L-ASA) by the reductive dephosphorylation of L-aspartyl-4-phosphate. This is Aspartate-semialdehyde dehydrogenase from Neisseria meningitidis serogroup B (strain ATCC BAA-335 / MC58).